The following is a 126-amino-acid chain: Large ribosomal subunit protein bL21 (126 aa).

Residues 105-126 (KKPSVGPRAKRTKAAPAAEAAE) are disordered.

As to quaternary structure, contacts protein L20. Part of the 50S ribosomal subunit.

This protein binds to 23S rRNA in the presence of protein L20. The sequence is that of Large ribosomal subunit protein bL21 from Rhodopseudomonas palustris (strain ATCC BAA-98 / CGA009).